Reading from the N-terminus, the 395-residue chain is Flap endonuclease 1 (395 aa).

The N-domain stretch occupies residues Met-1 to Lys-104. A Mg(2+)-binding site is contributed by Asp-34. DNA-binding residues include Arg-47 and Arg-70. A Mg(2+)-binding site is contributed by Asp-86. Residues Arg-103–Val-123 are disordered. An I-domain region spans residues Asp-122 to His-253. Mg(2+)-binding residues include Glu-158, Glu-160, Asp-179, and Asp-181. A DNA-binding site is contributed by Glu-158. Positions 231 and 233 each coordinate DNA. Asp-233 is a Mg(2+) binding site. Positions Gln-341–Phe-349 are interaction with PCNA. A compositionally biased stretch (basic and acidic residues) spans Asp-356 to Ser-389. Residues Asp-356 to Ala-395 are disordered.

It belongs to the XPG/RAD2 endonuclease family. FEN1 subfamily. As to quaternary structure, interacts with PCNA. Three molecules of FEN1 bind to one PCNA trimer with each molecule binding to one PCNA monomer. PCNA stimulates the nuclease activity without altering cleavage specificity. Requires Mg(2+) as cofactor. Post-translationally, phosphorylated. Phosphorylation upon DNA damage induces relocalization to the nuclear plasma.

Its subcellular location is the nucleus. The protein resides in the nucleolus. The protein localises to the nucleoplasm. It localises to the mitochondrion. Structure-specific nuclease with 5'-flap endonuclease and 5'-3' exonuclease activities involved in DNA replication and repair. During DNA replication, cleaves the 5'-overhanging flap structure that is generated by displacement synthesis when DNA polymerase encounters the 5'-end of a downstream Okazaki fragment. It enters the flap from the 5'-end and then tracks to cleave the flap base, leaving a nick for ligation. Also involved in the long patch base excision repair (LP-BER) pathway, by cleaving within the apurinic/apyrimidinic (AP) site-terminated flap. Acts as a genome stabilization factor that prevents flaps from equilibrating into structures that lead to duplications and deletions. Also possesses 5'-3' exonuclease activity on nicked or gapped double-stranded DNA, and exhibits RNase H activity. Also involved in replication and repair of rDNA and in repairing mitochondrial DNA. This is Flap endonuclease 1 from Uncinocarpus reesii (strain UAMH 1704).